Reading from the N-terminus, the 140-residue chain is MAVVLPAVVEELLSEMAAAVQESARIPDEYLLSLKFLFGSSATQALDLVDRQSITLISSPSGRRVYQVLGSSSKTYTCLASCHYCSCPAFAFSVLRKSDSILCKHLLAVYLSQVMRTCQQLSVSDKQLTDILLMEKKQEA.

The SWIM-type zinc-finger motif lies at 66-114; it reads YQVLGSSSKTYTCLASCHYCSCPAFAFSVLRKSDSILCKHLLAVYLSQV.

The protein belongs to the SWS1 family. Interacts with RAD51D and XRCC3; involved in homologous recombination repair. Interacts with SWSAP1; they form a functional complex involved in homologous recombination repair and stabilize each other. Expressed in ovary and testis.

The protein localises to the nucleus. In terms of biological role, involved in early stages of the homologous recombination repair (HRR) pathway of double-stranded DNA breaks arising during DNA replication or induced by DNA-damaging agents. Required for meiotic progression, hence for fertility. The chain is Zinc finger SWIM domain-containing protein 7 (ZSWIM7) from Homo sapiens (Human).